The following is a 376-amino-acid chain: 5-hydroxytryptamine receptor 1D (376 aa).

The tract at residues 1 to 22 (MSPPNQSEEGLPQEASNRSLNA) is disordered. Residues N5, N17, and N21 are each glycosylated (N-linked (GlcNAc...) asparagine). The next 3 helical transmembrane spans lie at 39–64 (VSLV…TTIL), 76–97 (LIGS…ISIA), and 110–134 (LCDI…VIAL). The cysteines at positions 111 and 188 are disulfide-linked. The serotonin site is built by D118 and C122. A DRY motif; important for ligand-induced conformation changes motif is present at residues 135–137 (DRY). 4 consecutive transmembrane segments (helical) span residues 155–176 (AGAM…PLFW), 195–218 (ISYT…ILYS), 300–325 (KTLG…VLPI), and 335–358 (ALFD…YTVF). Position 320 (S320) interacts with serotonin. Residues 351–355 (NPIIY) carry the NPxxY motif; important for ligand-induced conformation changes and signaling motif.

The protein belongs to the G-protein coupled receptor 1 family. As to quaternary structure, homodimer. Heterodimer with HTR1B.

Its subcellular location is the cell membrane. G-protein coupled receptor for 5-hydroxytryptamine (serotonin). Also functions as a receptor for ergot alkaloid derivatives, various anxiolytic and antidepressant drugs and other psychoactive substances. Ligand binding causes a conformation change that triggers signaling via guanine nucleotide-binding proteins (G proteins) and modulates the activity of downstream effectors, such as adenylate cyclase. HTR1D is coupled to G(i)/G(o) G alpha proteins and mediates inhibitory neurotransmission by inhibiting adenylate cyclase activity. Regulates the release of 5-hydroxytryptamine in the brain, and thereby affects neural activity. May also play a role in regulating the release of other neurotransmitters. May play a role in vasoconstriction. The polypeptide is 5-hydroxytryptamine receptor 1D (HTR1D) (Cavia porcellus (Guinea pig)).